Reading from the N-terminus, the 257-residue chain is Thiazole synthase (257 aa).

K96 (schiff-base intermediate with DXP) is an active-site residue. 1-deoxy-D-xylulose 5-phosphate is bound by residues G157, 184-185 (AG), and 206-207 (NT).

The protein belongs to the ThiG family. As to quaternary structure, homotetramer. Forms heterodimers with either ThiH or ThiS.

The protein resides in the cytoplasm. It catalyses the reaction [ThiS sulfur-carrier protein]-C-terminal-Gly-aminoethanethioate + 2-iminoacetate + 1-deoxy-D-xylulose 5-phosphate = [ThiS sulfur-carrier protein]-C-terminal Gly-Gly + 2-[(2R,5Z)-2-carboxy-4-methylthiazol-5(2H)-ylidene]ethyl phosphate + 2 H2O + H(+). It functions in the pathway cofactor biosynthesis; thiamine diphosphate biosynthesis. Catalyzes the rearrangement of 1-deoxy-D-xylulose 5-phosphate (DXP) to produce the thiazole phosphate moiety of thiamine. Sulfur is provided by the thiocarboxylate moiety of the carrier protein ThiS. In vitro, sulfur can be provided by H(2)S. This Bartonella henselae (strain ATCC 49882 / DSM 28221 / CCUG 30454 / Houston 1) (Rochalimaea henselae) protein is Thiazole synthase.